A 526-amino-acid polypeptide reads, in one-letter code: Peptide chain release factor 3 (526 aa).

The tr-type G domain occupies 8 to 277 (SKRRTFAIIS…GLTRWAPAPQ (270 aa)). GTP contacts are provided by residues 17 to 24 (SHPDAGKT), 85 to 89 (DTPGH), and 139 to 142 (NKLD).

This sequence belongs to the TRAFAC class translation factor GTPase superfamily. Classic translation factor GTPase family. PrfC subfamily.

The protein localises to the cytoplasm. Increases the formation of ribosomal termination complexes and stimulates activities of RF-1 and RF-2. It binds guanine nucleotides and has strong preference for UGA stop codons. It may interact directly with the ribosome. The stimulation of RF-1 and RF-2 is significantly reduced by GTP and GDP, but not by GMP. The polypeptide is Peptide chain release factor 3 (Vibrio atlanticus (strain LGP32) (Vibrio splendidus (strain Mel32))).